The sequence spans 523 residues: Jerky protein homolog-like (523 aa).

Residues 1–52 (MSGKRKRVVLTIKDKLDIIKKLEDGGSSKQLAVIYGIGETTVRDIRKNKEKI) enclose the HTH psq-type domain. DNA-binding regions (H-T-H motif) lie at residues 28–48 (SKQL…IRKN) and 100–132 (PICA…FKQR). One can recognise an HTH CENPB-type domain in the interval 67 to 139 (KRKSMKPSMY…KQRHSIREIN (73 aa)). Residues 168–385 (LQPEQIYNAD…VKPVTISRAW (218 aa)) form the DDE-1 domain.

Belongs to the tigger transposable element derived protein family.

It localises to the nucleus. The protein is Jerky protein homolog-like (Jrkl) of Mus musculus (Mouse).